Reading from the N-terminus, the 110-residue chain is BolA-like protein 3 (110 aa).

Belongs to the BolA/IbaG family. Interacts with NFU1.

It localises to the mitochondrion. Functionally, acts as a mitochondrial iron-sulfur (Fe-S) cluster assembly factor that facilitates (Fe-S) cluster insertion into a subset of mitochondrial proteins. Probably acts together with NFU1. This Mus musculus (Mouse) protein is BolA-like protein 3 (Bola3).